A 208-amino-acid chain; its full sequence is Uracil phosphoribosyltransferase (208 aa).

Residues arginine 78, arginine 103, and 130 to 138 (DPMLATGGS) contribute to the 5-phospho-alpha-D-ribose 1-diphosphate site. Uracil is bound by residues isoleucine 193 and 198-200 (GDA). Aspartate 199 is a 5-phospho-alpha-D-ribose 1-diphosphate binding site.

Belongs to the UPRTase family. Mg(2+) is required as a cofactor.

The enzyme catalyses UMP + diphosphate = 5-phospho-alpha-D-ribose 1-diphosphate + uracil. It participates in pyrimidine metabolism; UMP biosynthesis via salvage pathway; UMP from uracil: step 1/1. Its activity is regulated as follows. Allosterically activated by GTP. Functionally, catalyzes the conversion of uracil and 5-phospho-alpha-D-ribose 1-diphosphate (PRPP) to UMP and diphosphate. In Shewanella oneidensis (strain ATCC 700550 / JCM 31522 / CIP 106686 / LMG 19005 / NCIMB 14063 / MR-1), this protein is Uracil phosphoribosyltransferase.